The primary structure comprises 188 residues: Accessory gene regulator protein B (188 aa).

4 helical membrane passes run 49–69, 100–122, 143–163, and 164–184; these read VALI…YFLV, VYFQ…LIIY, LLSI…PEPF, and KQLI…IFFP.

This sequence belongs to the AgrB family.

Its subcellular location is the cell membrane. In terms of biological role, essential for the production of a quorum sensing system signal molecule, the autoinducing peptide (AIP). This quorum sensing system is responsible for the regulation of the expression of virulence factor genes. Involved in the proteolytic processing of AgrD, the precursor of AIP. This is Accessory gene regulator protein B from Staphylococcus haemolyticus (strain JCSC1435).